We begin with the raw amino-acid sequence, 442 residues long: Gamma-glutamyl phosphate reductase (442 aa).

It belongs to the gamma-glutamyl phosphate reductase family.

The protein resides in the cytoplasm. It catalyses the reaction L-glutamate 5-semialdehyde + phosphate + NADP(+) = L-glutamyl 5-phosphate + NADPH + H(+). It participates in amino-acid biosynthesis; L-proline biosynthesis; L-glutamate 5-semialdehyde from L-glutamate: step 2/2. In terms of biological role, catalyzes the NADPH-dependent reduction of L-glutamate 5-phosphate into L-glutamate 5-semialdehyde and phosphate. The product spontaneously undergoes cyclization to form 1-pyrroline-5-carboxylate. In Campylobacter curvus (strain 525.92), this protein is Gamma-glutamyl phosphate reductase.